Here is a 178-residue protein sequence, read N- to C-terminus: uncharacterized protein (178 aa).

The next 5 membrane-spanning stretches (helical) occupy residues 13-33, 48-68, 80-100, 115-135, and 155-175; these read GIVL…FFMP, MLNA…LIMI, ILAA…YHSI, IYFF…PLAL, and WTMP…LMIS.

Its subcellular location is the cell membrane. This is an uncharacterized protein from Bacillus subtilis (strain 168).